We begin with the raw amino-acid sequence, 1435 residues long: Putative ATP-dependent RNA helicase YLR419W (1435 aa).

Disordered stretches follow at residues 1–57 (MAKK…STAS) and 226–251 (LSSH…KNSH). Ser9 is subject to Phosphoserine. The span at 31-43 (KGQEPEPEDDKRA) shows a compositional bias: basic and acidic residues. Polar residues predominate over residues 45-57 (QQSNRAKVTSTAS). A UBA domain is found at 365 to 406 (PLSTRMIVERLTEIGVSSDEALLALQQNDMNENEAAGFLTRE). In terms of domain architecture, RWD spans 430-531 (QELESLESIY…EWLKENISKI (102 aa)). The interval 543 to 566 (DSKGAINKRNISNGKRSINNSSSR) is disordered. A compositionally biased stretch (polar residues) spans 551–566 (RNISNGKRSINNSSSR). The region spanning 614–782 (IDIINKNEVV…FPGLATCHIE (169 aa)) is the Helicase ATP-binding domain. Residue 627 to 634 (GETGSGKS) coordinates ATP. The short motif at 729-732 (DEVH) is the DEAH box element. Position 816 is a phosphoserine (Ser816). Positions 845–1020 (LLCQVVEYVH…SLYLSVKAMG (176 aa)) constitute a Helicase C-terminal domain.

Belongs to the DEAD box helicase family. DEAH subfamily.

The protein localises to the cytoplasm. The enzyme catalyses ATP + H2O = ADP + phosphate + H(+). In terms of biological role, probable ATP-binding RNA helicase. In Saccharomyces cerevisiae (strain ATCC 204508 / S288c) (Baker's yeast), this protein is Putative ATP-dependent RNA helicase YLR419W.